Here is a 162-residue protein sequence, read N- to C-terminus: uncharacterized protein (162 aa).

Residues 78-154 (KNLVVVDIGA…KAIKNLHYVG (77 aa)) form the PUA domain.

This is an uncharacterized protein from Methanocaldococcus jannaschii (strain ATCC 43067 / DSM 2661 / JAL-1 / JCM 10045 / NBRC 100440) (Methanococcus jannaschii).